Consider the following 332-residue polypeptide: Ferredoxin--NADP reductase (332 aa).

Residues Glu-35, Gln-43, Tyr-48, Val-88, Phe-122, Asp-286, and Ser-326 each contribute to the FAD site.

This sequence belongs to the ferredoxin--NADP reductase type 2 family. Homodimer. It depends on FAD as a cofactor.

The catalysed reaction is 2 reduced [2Fe-2S]-[ferredoxin] + NADP(+) + H(+) = 2 oxidized [2Fe-2S]-[ferredoxin] + NADPH. This is Ferredoxin--NADP reductase from Limosilactobacillus reuteri (strain DSM 20016) (Lactobacillus reuteri).